Here is a 198-residue protein sequence, read N- to C-terminus: MFLFGKQKTPKEVLRENQRNLNKSMREIDRERVALQNQEKKIILDIKKMAKQGQMNSAKIMAKDLVRTRYHIQKFYEMKTQLQAVSLRIQTLQSTQAMAEAMKGVTKAMITMNRQMNLPQFTKIMMEFEQQSDKMDMKEEMMNDTMDQVMEQDGEEEQSQEILNQVLDEIGIDLASQLVDAPTTVGTSVASKHQVNSG.

The stretch at 11 to 42 (KEVLRENQRNLNKSMREIDRERVALQNQEKKI) forms a coiled coil.

Belongs to the SNF7 family. Probable core component of the endosomal sorting required for transport complex III (ESCRT-III). ESCRT-III components are thought to multimerize to form a flat lattice on the perimeter membrane of the endosome.

It is found in the endosome membrane. Its function is as follows. Probable core component of the endosomal sorting required for transport complex III (ESCRT-III) which is involved in multivesicular bodies (MVBs) formation and sorting of endosomal cargo proteins into MVBs. MVBs contain intraluminal vesicles (ILVs) that are generated by invagination and scission from the limiting membrane of the endosome and are delivered to lysosomes enabling degradation of membrane proteins. This chain is Charged multivesicular body protein 2a homolog 2 (chmp2a2), found in Dictyostelium discoideum (Social amoeba).